Reading from the N-terminus, the 315-residue chain is Glycine--tRNA ligase alpha subunit (315 aa).

This sequence belongs to the class-II aminoacyl-tRNA synthetase family. In terms of assembly, tetramer of two alpha and two beta subunits.

The protein resides in the cytoplasm. The enzyme catalyses tRNA(Gly) + glycine + ATP = glycyl-tRNA(Gly) + AMP + diphosphate. The sequence is that of Glycine--tRNA ligase alpha subunit from Pseudomonas aeruginosa (strain LESB58).